We begin with the raw amino-acid sequence, 273 residues long: Large ribosomal subunit protein uL2 (273 aa).

Disordered stretches follow at residues Lys28–His53 and Arg221–Lys273. The span at Lys39 to Arg48 shows a compositional bias: low complexity.

This sequence belongs to the universal ribosomal protein uL2 family. Part of the 50S ribosomal subunit. Forms a bridge to the 30S subunit in the 70S ribosome.

Its function is as follows. One of the primary rRNA binding proteins. Required for association of the 30S and 50S subunits to form the 70S ribosome, for tRNA binding and peptide bond formation. It has been suggested to have peptidyltransferase activity; this is somewhat controversial. Makes several contacts with the 16S rRNA in the 70S ribosome. The polypeptide is Large ribosomal subunit protein uL2 (Pectobacterium atrosepticum (strain SCRI 1043 / ATCC BAA-672) (Erwinia carotovora subsp. atroseptica)).